Here is a 365-residue protein sequence, read N- to C-terminus: Chorismate synthase (365 aa).

Residue arginine 48 participates in NADP(+) binding. FMN is bound by residues arginine 125 to serine 127, asparagine 238 to alanine 239, glycine 278, lysine 293 to serine 297, and arginine 319.

Belongs to the chorismate synthase family. In terms of assembly, homotetramer. FMNH2 serves as cofactor.

It catalyses the reaction 5-O-(1-carboxyvinyl)-3-phosphoshikimate = chorismate + phosphate. The protein operates within metabolic intermediate biosynthesis; chorismate biosynthesis; chorismate from D-erythrose 4-phosphate and phosphoenolpyruvate: step 7/7. Catalyzes the anti-1,4-elimination of the C-3 phosphate and the C-6 proR hydrogen from 5-enolpyruvylshikimate-3-phosphate (EPSP) to yield chorismate, which is the branch point compound that serves as the starting substrate for the three terminal pathways of aromatic amino acid biosynthesis. This reaction introduces a second double bond into the aromatic ring system. The sequence is that of Chorismate synthase from Ruthia magnifica subsp. Calyptogena magnifica.